The sequence spans 816 residues: Coiled-coil and C2 domain-containing protein 1-like (816 aa).

The segment covering 1–11 (MFSRKKPEPAK) has biased composition (basic and acidic residues). Disordered stretches follow at residues 1 to 135 (MFSR…TFLP), 157 to 176 (ANAK…RGLK), and 186 to 269 (AAGK…RQTD). The span at 25–47 (IPDDFDPSAGYGEDDGGDSDLEA) shows a compositional bias: acidic residues. Residues 73–85 (DLDKMIADSLRDV) show a composition bias toward basic and acidic residues. Residues 86–100 (SDDDDDDNLESDPDL) are compositionally biased toward acidic residues. Residues 122–131 (PPAASEEPVQ) are compositionally biased toward low complexity. Positions 145 to 200 (IKQRLEMYKQAEANAKTAGDSGKARRFGRGLKTLKDLHRQAAAGKSINVDDIPPEV) are DM14 1. Residues 220 to 243 (PSTPASPPPVPSRAAPDPPTPGTP) show a composition bias toward pro residues. DM14 stretches follow at residues 265-317 (SRQT…MPPP) and 365-419 (LQQR…LPVP). A coiled-coil region spans residues 355 to 382 (LAAATNMLEALQQRLEKYQSVEAAAKAE). Residues 418 to 492 (VPPGFGPLPT…TRTSGNQQKN (75 aa)) form a disordered region. The span at 424-433 (PLPTADAAPV) shows a compositional bias: low complexity. Residues 434–449 (APTPSLPTSPTSPPPT) are compositionally biased toward pro residues. Low complexity predominate over residues 450 to 471 (ASTSAGGTPSSSSATTPTAPRK). The segment covering 483-492 (TRTSGNQQKN) has biased composition (polar residues). A DM14 4 region spans residues 502–556 (LLERQKEFKLAAIEAKKAGEIDQAKEYLKIFKGFDSLLNAASSGLPVDLSTLPVP). A C2 domain is found at 637-776 (RKNEPLPKFH…ETKCEIHDTY (140 aa)).

This sequence belongs to the CC2D1 family. As to quaternary structure, interacts (via DM14 domains 1 and 3) with shrb; the interaction is direct and blocks access to the surface involved in shrb polymerization. This interaction may be required for the ESCRT-III complex role in multivesicular body formation.

It is found in the cytoplasm. The protein localises to the cytosol. It localises to the apicolateral cell membrane. Its subcellular location is the cell cortex. The protein resides in the endosome. Phosphatidyl inositol monophosphate binding protein involved in endosomal protein sorting through regulation of the endosomal sorting required for transport (ESCRT) pathway. Required for full activity of the ESCRT-III complex core component shrb/shrub, probably by preventing its inappropriate polymerisation. Required, but not essential, for the efficient generation of intraluminal vesicles (ILVs) in multivesicular bodies (MVBs). Involved in a late stage of the endosomal pathway targeting transmembrane proteins of the plasma membrane for lysosomal degradation. Plays a critical role in regulation of multiple signal transduction pathways, including the Notch and BMP/decapentaplegic (dpp) signaling pathways, through targeting of membrane bound receptors to multivesicular bodies, isolating them from the cytoplasm and targeting them for lysosomal degradation. Involved in targeting N/Notch for endosomal degradation, negatively regulating the Notch signaling pathway. Regulates Notch signaling in imaginal disk cells and follicle cells during oogenesis and multiple developmental processes, including development of wings, veins, legs, eyes and bristles. Restricts the activity of Notch to the dorsoventral (D/V) boundary of the wing imaginal disk. In external sensory organ development regulates Notch signaling during asymmetric cell division and differentiation of sensory organ precursor cells. May be involved in regulation of apoptosis and cell growth independent of Notch signaling. Involved in targeting tkv for endosomal degradation, negatively regulating the BMP/decapentaplegic (dpp) signaling pathway. Regulates the BMP/dpp signaling pathway in follicle cells during oogenesis, but not in imaginal disk cells during wing development. May be involved in differentiation or morphogenesis of peripodial epithelial cells in the developing imaginal disk. Involved in abscission of germline cells during oogenesis. The protein is Coiled-coil and C2 domain-containing protein 1-like of Drosophila melanogaster (Fruit fly).